We begin with the raw amino-acid sequence, 90 residues long: Small ribosomal subunit protein uS17m (90 aa).

This sequence belongs to the universal ribosomal protein uS17 family. Component of the mitochondrial small ribosomal subunit (mt-SSU). Mature yeast 74S mitochondrial ribosomes consist of a small (37S) and a large (54S) subunit. The 37S small subunit contains a 15S ribosomal RNA (15S mt-rRNA) and at least 32 different proteins. The 54S large subunit contains a 21S rRNA (21S mt-rRNA) and at least 45 different proteins.

It is found in the mitochondrion. Functionally, component of the mitochondrial ribosome (mitoribosome), a dedicated translation machinery responsible for the synthesis of mitochondrial genome-encoded proteins, including at least some of the essential transmembrane subunits of the mitochondrial respiratory chain. The mitoribosomes are attached to the mitochondrial inner membrane and translation products are cotranslationally integrated into the membrane. uS17m may have a meiosis-specific role as it accumulates during the middle stage of sporulation. The protein is Small ribosomal subunit protein uS17m of Schizosaccharomyces pombe (strain 972 / ATCC 24843) (Fission yeast).